We begin with the raw amino-acid sequence, 115 residues long: Large ribosomal subunit protein bL20 (115 aa).

Belongs to the bacterial ribosomal protein bL20 family.

Its function is as follows. Binds directly to 23S ribosomal RNA and is necessary for the in vitro assembly process of the 50S ribosomal subunit. It is not involved in the protein synthesizing functions of that subunit. This is Large ribosomal subunit protein bL20 from Borrelia hermsii (strain HS1 / DAH).